The following is a 247-amino-acid chain: Small ribosomal subunit protein uS3 (247 aa).

Positions 38-106 (IRDFLSEGLD…QVQLNILEVK (69 aa)) constitute a KH type-2 domain. Residues 214 to 226 (SLMNARDERPSRG) show a composition bias toward basic and acidic residues. Positions 214 to 247 (SLMNARDERPSRGRRERPRRGGARRQRAEQKQEG) are disordered. Positions 227–238 (RRERPRRGGARR) are enriched in basic residues.

This sequence belongs to the universal ribosomal protein uS3 family. In terms of assembly, part of the 30S ribosomal subunit. Forms a tight complex with proteins S10 and S14.

In terms of biological role, binds the lower part of the 30S subunit head. Binds mRNA in the 70S ribosome, positioning it for translation. In Corynebacterium jeikeium (strain K411), this protein is Small ribosomal subunit protein uS3.